The sequence spans 374 residues: N5-carboxyaminoimidazole ribonucleotide synthase (374 aa).

Residues Arg108, Lys148, 153–159 (GYDGKGQ), 183–186 (EQFL), Glu191, His214, and 266–267 (NE) each bind ATP. Residues 112 to 296 (KQTLQKAGSK…QFDTHILAVT (185 aa)) enclose the ATP-grasp domain.

The protein belongs to the PurK/PurT family. In terms of assembly, homodimer.

The enzyme catalyses 5-amino-1-(5-phospho-beta-D-ribosyl)imidazole + hydrogencarbonate + ATP = 5-carboxyamino-1-(5-phospho-D-ribosyl)imidazole + ADP + phosphate + 2 H(+). It participates in purine metabolism; IMP biosynthesis via de novo pathway; 5-amino-1-(5-phospho-D-ribosyl)imidazole-4-carboxylate from 5-amino-1-(5-phospho-D-ribosyl)imidazole (N5-CAIR route): step 1/2. Functionally, catalyzes the ATP-dependent conversion of 5-aminoimidazole ribonucleotide (AIR) and HCO(3)(-) to N5-carboxyaminoimidazole ribonucleotide (N5-CAIR). The sequence is that of N5-carboxyaminoimidazole ribonucleotide synthase from Staphylococcus haemolyticus (strain JCSC1435).